Reading from the N-terminus, the 100-residue chain is Small ribosomal subunit protein uS14c (100 aa).

The protein belongs to the universal ribosomal protein uS14 family. In terms of assembly, part of the 30S ribosomal subunit.

The protein resides in the plastid. It localises to the chloroplast. In terms of biological role, binds 16S rRNA, required for the assembly of 30S particles. This chain is Small ribosomal subunit protein uS14c, found in Pelargonium hortorum (Common geranium).